Consider the following 230-residue polypeptide: 7-cyano-7-deazaguanine synthase (230 aa).

9 to 19 is a binding site for ATP; that stretch reads LSGGLDSATTA. The Zn(2+) site is built by Cys190, Cys198, Cys201, and Cys204.

It belongs to the QueC family. Requires Zn(2+) as cofactor.

The catalysed reaction is 7-carboxy-7-deazaguanine + NH4(+) + ATP = 7-cyano-7-deazaguanine + ADP + phosphate + H2O + H(+). It participates in purine metabolism; 7-cyano-7-deazaguanine biosynthesis. Catalyzes the ATP-dependent conversion of 7-carboxy-7-deazaguanine (CDG) to 7-cyano-7-deazaguanine (preQ(0)). The polypeptide is 7-cyano-7-deazaguanine synthase (Microcystis aeruginosa (strain NIES-843 / IAM M-2473)).